A 974-amino-acid polypeptide reads, in one-letter code: Leucine-rich repeat receptor-like kinase protein SUNN (974 aa).

Residues 1–20 (MKNITCYLLLLCMLFTTCYS) form the signal peptide. N-linked (GlcNAc...) asparagine glycans are attached at residues Asn-75, Asn-104, Asn-123, and Asn-136. LRR repeat units lie at residues 92-116 (LNMLESLTITMDNLTGELPTELSKL), 117-141 (TSLRILNISHNLFSGNFPGNITFGM), 143-165 (KLEALDAYDNNFEGPLPEEIVSL), 166-188 (MKLKYLSFAGNFFSGTIPESYSE), 189-213 (FQKLEILRLNYNSLTGKIPKSLSKL), 238-262 (IKSLRYLEISNANLTGEIPPSLGNL), 263-286 (ENLDSLFLQMNNLTGTIPPELSSM), 288-309 (SLMSLDLSINGLSGEIPETFSK), 310-334 (LKNLTLINFFQNKLRGSIPAFIGDL), 335-358 (PNLETLQVWENNFSFVLPQNLGSN), 360-382 (KFIYFDVTKNHLTGLIPPELCKS), 383-406 (KKLKTFIVTDNFFRGPIPNGIGPC), 407-430 (KSLEKIRVANNYLDGPVPPGIFQL), 431-454 (PSVQIIELGNNRFNGQLPTEISGN), 456-477 (LGNLALSNNLFTGRIPASMKNL), 478-501 (RSLQTLLLDANQFLGEIPAEVFAL), 503-525 (VLTRINISGNNLTGGIPKTVTQC), 527-549 (SLTAVDFSRNMLTGEVPKGMKNL), 550-573 (KVLSIFNVSHNSISGKIPDEIRFM), and 574-598 (TSLTTLDLSYNNFTGIVPTGGQFLV). Residues Asn-250 and Asn-274 are each glycosylated (N-linked (GlcNAc...) asparagine). N-linked (GlcNAc...) asparagine glycans are attached at residues Asn-312 and Asn-346. Asn-508 and Asn-513 each carry an N-linked (GlcNAc...) asparagine glycan. Residues Asn-556 and Asn-585 are each glycosylated (N-linked (GlcNAc...) asparagine). A helical transmembrane segment spans residues 635–655 (VVIAIVFATAVLMVIVTLHMM). One can recognise a Protein kinase domain in the interval 685–972 (LKEENIIGKG…PPHSTSHNLI (288 aa)). ATP is bound by residues 691-699 (IGKGGAGIV) and Lys-713. Catalysis depends on Asp-810, which acts as the Proton acceptor.

It belongs to the protein kinase superfamily. Ser/Thr protein kinase family. Expressed in roots and shoots. Expressed in the vasculature of leaves, petioles, stems and roots.

Its subcellular location is the cell membrane. It carries out the reaction L-seryl-[protein] + ATP = O-phospho-L-seryl-[protein] + ADP + H(+). It catalyses the reaction L-threonyl-[protein] + ATP = O-phospho-L-threonyl-[protein] + ADP + H(+). In terms of biological role, LRR receptor kinase involved in the regulation of root growth and root nodule organogenesis. Involved in long distance nodulation signaling events. Involved in the autoregulation of nodulation (AON), a long distance systemic signaling from root to shoot and back again, which allows legumes to limit the number of root nodules formed based on available nitrogen and previous rhizobial colonization. Acts from shoot to root to control AON. Interacts with CLE12 and CLE13 signaling to control nodule numbers. Required for the modulation of shoot-to-root auxin transport in response to altered nitrogen tissue concentrations and in the absence of rhizobia. Shoot-to-root auxin transport influences lateral root density and length. Involved in the regulation of root colonization by arbuscular mycorrhizal (AM) fungi. Interacts with CLE33 and CL53 signaling to repress strigolactone biosynthetic genes and strigolactone content in the roots, and consequently reduces the promotion of further colonization by AM fungi. This Medicago truncatula (Barrel medic) protein is Leucine-rich repeat receptor-like kinase protein SUNN.